We begin with the raw amino-acid sequence, 161 residues long: Large ribosomal subunit protein bL9 (161 aa).

It belongs to the bacterial ribosomal protein bL9 family.

Its function is as follows. Binds to the 23S rRNA. This is Large ribosomal subunit protein bL9 from Blochmanniella floridana.